Reading from the N-terminus, the 445-residue chain is tRNA-2-methylthio-N(6)-dimethylallyladenosine synthase (445 aa).

Residues 9-125 enclose the MTTase N-terminal domain; it reads LKYRILTYGC…LPYLIARAKE (117 aa). Positions 18, 54, 88, 162, 166, and 169 each coordinate [4Fe-4S] cluster. In terms of domain architecture, Radical SAM core spans 148–378; that stretch reads RKPGLSAFVN…NRRQYQIATE (231 aa). Positions 381-444 constitute a TRAM domain; the sequence is QELQGSIQEV…TFSLFGEIFN (64 aa).

This sequence belongs to the methylthiotransferase family. MiaB subfamily. As to quaternary structure, monomer. [4Fe-4S] cluster is required as a cofactor.

The protein resides in the cytoplasm. The enzyme catalyses N(6)-dimethylallyladenosine(37) in tRNA + (sulfur carrier)-SH + AH2 + 2 S-adenosyl-L-methionine = 2-methylsulfanyl-N(6)-dimethylallyladenosine(37) in tRNA + (sulfur carrier)-H + 5'-deoxyadenosine + L-methionine + A + S-adenosyl-L-homocysteine + 2 H(+). Functionally, catalyzes the methylthiolation of N6-(dimethylallyl)adenosine (i(6)A), leading to the formation of 2-methylthio-N6-(dimethylallyl)adenosine (ms(2)i(6)A) at position 37 in tRNAs that read codons beginning with uridine. This Syntrophomonas wolfei subsp. wolfei (strain DSM 2245B / Goettingen) protein is tRNA-2-methylthio-N(6)-dimethylallyladenosine synthase.